The primary structure comprises 517 residues: Urethanase (517 aa).

Active-site charge relay system residues include K98 and S173. S197 serves as the catalytic Acyl-ester intermediate.

This sequence belongs to the amidase family. Homooctamer.

It catalyses the reaction urethane + H2O + H(+) = ethanol + NH4(+) + CO2. Exhibits poor salt tolerance but excellent tolerance to low concentrations of ethanol. EDTA has almost no impact on activity. Activity is increased in the presence of Ca(2+), Mg(2+) and Co(3+) and inhibited in the presence of Al(3+), Zn(2+) and Cu(2+). Functionally, hydrolase that can catalyze the degradation of ethyl carbamate (also called urethane), a probable human carcinogen widely found in alcoholic beverages. Can also use methyl carbamate, butyl carbamate, acetamide and urea. Also catalyzes the enantioselective hydrolysis of 2-phenylpropionamide, alpha-chlorophenylacetamide, 2-methyl-3-phenylpropionamide and alpha-methoxyphenylacetamide to the corresponding acids. Is inactive on benzamide and L-glutamine. In Rhizobium radiobacter (Agrobacterium tumefaciens), this protein is Urethanase.